A 146-amino-acid polypeptide reads, in one-letter code: 3-dehydroquinate dehydratase (146 aa).

Tyr22 functions as the Proton acceptor in the catalytic mechanism. Residues Asn73, His79, and Asp86 each coordinate substrate. The active-site Proton donor is the His101. Residues 102–103 (IS) and Arg112 each bind substrate.

This sequence belongs to the type-II 3-dehydroquinase family. As to quaternary structure, homododecamer.

It catalyses the reaction 3-dehydroquinate = 3-dehydroshikimate + H2O. It functions in the pathway metabolic intermediate biosynthesis; chorismate biosynthesis; chorismate from D-erythrose 4-phosphate and phosphoenolpyruvate: step 3/7. Its function is as follows. Catalyzes a trans-dehydration via an enolate intermediate. The polypeptide is 3-dehydroquinate dehydratase (aroQ) (Corynebacterium pseudotuberculosis (strain C231)).